Reading from the N-terminus, the 286-residue chain is Polyamine aminopropyltransferase (286 aa).

The 236-residue stretch at 2-237 (DLWFSEVHTP…GYWLFGFASK (236 aa)) folds into the PABS domain. S-methyl-5'-thioadenosine is bound at residue glutamine 31. Aspartate 86 is a spermidine binding site. Residues glutamate 106 and 137-138 (NG) contribute to the S-methyl-5'-thioadenosine site. Residue aspartate 155 is the Proton acceptor of the active site.

The protein belongs to the spermidine/spermine synthase family. As to quaternary structure, homodimer or homotetramer.

It is found in the cytoplasm. The enzyme catalyses S-adenosyl 3-(methylsulfanyl)propylamine + putrescine = S-methyl-5'-thioadenosine + spermidine + H(+). It functions in the pathway amine and polyamine biosynthesis; spermidine biosynthesis; spermidine from putrescine: step 1/1. Catalyzes the irreversible transfer of a propylamine group from the amino donor S-adenosylmethioninamine (decarboxy-AdoMet) to putrescine (1,4-diaminobutane) to yield spermidine. The sequence is that of Polyamine aminopropyltransferase from Streptococcus pneumoniae serotype 4 (strain ATCC BAA-334 / TIGR4).